The primary structure comprises 629 residues: tRNA uridine 5-carboxymethylaminomethyl modification enzyme MnmG (629 aa).

FAD-binding positions include 13–18 (GGGHAG), Val125, and Ser180. 273–287 (GPRYCPSIEDKVMRF) lines the NAD(+) pocket. Gln370 contacts FAD.

Belongs to the MnmG family. As to quaternary structure, homodimer. Heterotetramer of two MnmE and two MnmG subunits. FAD serves as cofactor.

The protein localises to the cytoplasm. NAD-binding protein involved in the addition of a carboxymethylaminomethyl (cmnm) group at the wobble position (U34) of certain tRNAs, forming tRNA-cmnm(5)s(2)U34. This Cronobacter sakazakii (strain ATCC BAA-894) (Enterobacter sakazakii) protein is tRNA uridine 5-carboxymethylaminomethyl modification enzyme MnmG.